The following is a 602-amino-acid chain: Elongation factor 4 (602 aa).

The 183-residue stretch at 7–189 (RKIRNFSIIA…AIVKNIPPPT (183 aa)) folds into the tr-type G domain. Residues 19 to 24 (DHGKST) and 136 to 139 (NKID) each bind GTP.

The protein belongs to the TRAFAC class translation factor GTPase superfamily. Classic translation factor GTPase family. LepA subfamily.

It is found in the cell membrane. The catalysed reaction is GTP + H2O = GDP + phosphate + H(+). Required for accurate and efficient protein synthesis under certain stress conditions. May act as a fidelity factor of the translation reaction, by catalyzing a one-codon backward translocation of tRNAs on improperly translocated ribosomes. Back-translocation proceeds from a post-translocation (POST) complex to a pre-translocation (PRE) complex, thus giving elongation factor G a second chance to translocate the tRNAs correctly. Binds to ribosomes in a GTP-dependent manner. The protein is Elongation factor 4 of Alkaliphilus metalliredigens (strain QYMF).